Here is a 460-residue protein sequence, read N- to C-terminus: MEISIDSLWSQVLERLQIELSRPTFETWIKTANAERLENNCLVIITPNPFARNWLQKYYITTIANVVQSILGHPVEIYITVAKGEEFEEIGGGGAWELPTTNSIYETPNQNRQPNTELNAKYVFSRFVVGANNRMAHAASLAVAESPGREFNPLFLCGGVGLGKTHLMQAIGHYRWEICPDSKIFYVSTEQFTNDLITAIRNDSMQSFREHYRAADVLLVDDIQFIEGKEYTQEEFFHTFNTLHEAGKQVVIASDRPPNQIPSLQERLCSRFSMGLIADIQAPDLETRMAILQKKSEYEKIRLPRDVIEYIATNFTSNIRELEGALTRALAYISIWGLPMTVANLAPVLVTPTEKIAATPEAILTVIADNFDISVEDLKSNSRRREISWARQIGMYLMRQHTDLSFPRIGEEFGGKDHTTVLYSCDKIAQLVESDRGLSQTLRQLSDRIKMNSRSRKPSL.

The domain I, interacts with DnaA modulators stretch occupies residues 1–73 (MEISIDSLWS…ANVVQSILGH (73 aa)). Residues 73 to 116 (HPVEIYITVAKGEEFEEIGGGGAWELPTTNSIYETPNQNRQPNT) form a domain II region. The interval 117 to 333 (ELNAKYVFSR…GALTRALAYI (217 aa)) is domain III, AAA+ region. ATP is bound by residues G161, G163, K164, and T165. The interval 334–460 (SIWGLPMTVA…MNSRSRKPSL (127 aa)) is domain IV, binds dsDNA.

It belongs to the DnaA family. As to quaternary structure, oligomerizes as a right-handed, spiral filament on DNA at oriC.

The protein localises to the cytoplasm. Its function is as follows. Plays an essential role in the initiation and regulation of chromosomal replication. ATP-DnaA binds to the origin of replication (oriC) to initiate formation of the DNA replication initiation complex once per cell cycle. Binds the DnaA box (a 9 base pair repeat at the origin) and separates the double-stranded (ds)DNA. Forms a right-handed helical filament on oriC DNA; dsDNA binds to the exterior of the filament while single-stranded (ss)DNA is stabiized in the filament's interior. The ATP-DnaA-oriC complex binds and stabilizes one strand of the AT-rich DNA unwinding element (DUE), permitting loading of DNA polymerase. After initiation quickly degrades to an ADP-DnaA complex that is not apt for DNA replication. Binds acidic phospholipids. The chain is Chromosomal replication initiator protein DnaA from Trichormus variabilis (strain ATCC 29413 / PCC 7937) (Anabaena variabilis).